The following is a 663-amino-acid chain: UvrABC system protein B (663 aa).

The region spanning E30 to R417 is the Helicase ATP-binding domain. G43–T50 is a binding site for ATP. The short motif at Y96 to I119 is the Beta-hairpin element. The Helicase C-terminal domain occupies Q434–I600. Residues Q627 to E662 enclose the UVR domain.

This sequence belongs to the UvrB family. As to quaternary structure, forms a heterotetramer with UvrA during the search for lesions. Interacts with UvrC in an incision complex.

The protein resides in the cytoplasm. Its function is as follows. The UvrABC repair system catalyzes the recognition and processing of DNA lesions. A damage recognition complex composed of 2 UvrA and 2 UvrB subunits scans DNA for abnormalities. Upon binding of the UvrA(2)B(2) complex to a putative damaged site, the DNA wraps around one UvrB monomer. DNA wrap is dependent on ATP binding by UvrB and probably causes local melting of the DNA helix, facilitating insertion of UvrB beta-hairpin between the DNA strands. Then UvrB probes one DNA strand for the presence of a lesion. If a lesion is found the UvrA subunits dissociate and the UvrB-DNA preincision complex is formed. This complex is subsequently bound by UvrC and the second UvrB is released. If no lesion is found, the DNA wraps around the other UvrB subunit that will check the other stand for damage. This is UvrABC system protein B from Staphylococcus aureus (strain COL).